The following is a 134-amino-acid chain: MGFIQEFKDFAMRGNVVDLAVGIIIGGAFGKVVTALVDGVLMPPIGLLIGGVNFDQLAFELRAATAESAAVSLNYGAFLQTIVDFVIIAFSIFVVIKALNSLKRKSEEAPKAPPVPSKEEVLLGEIRDLLKERG.

2 helical membrane-spanning segments follow: residues 10–30 (FAMR…GAFG) and 76–96 (GAFL…FVVI).

It belongs to the MscL family. Homopentamer.

The protein resides in the cell inner membrane. Its function is as follows. Channel that opens in response to stretch forces in the membrane lipid bilayer. May participate in the regulation of osmotic pressure changes within the cell. The polypeptide is Large-conductance mechanosensitive channel (Prosthecochloris aestuarii (strain DSM 271 / SK 413)).